Consider the following 141-residue polypeptide: Large ribosomal subunit protein uL11 (141 aa).

It belongs to the universal ribosomal protein uL11 family. As to quaternary structure, part of the ribosomal stalk of the 50S ribosomal subunit. Interacts with L10 and the large rRNA to form the base of the stalk. L10 forms an elongated spine to which L12 dimers bind in a sequential fashion forming a multimeric L10(L12)X complex. One or more lysine residues are methylated.

In terms of biological role, forms part of the ribosomal stalk which helps the ribosome interact with GTP-bound translation factors. The chain is Large ribosomal subunit protein uL11 from Fusobacterium nucleatum subsp. nucleatum (strain ATCC 25586 / DSM 15643 / BCRC 10681 / CIP 101130 / JCM 8532 / KCTC 2640 / LMG 13131 / VPI 4355).